The primary structure comprises 505 residues: ATP synthase subunit alpha (505 aa).

Residue 171–178 (GDRQTGKT) participates in ATP binding.

This sequence belongs to the ATPase alpha/beta chains family. In terms of assembly, F-type ATPases have 2 components, CF(1) - the catalytic core - and CF(0) - the membrane proton channel. CF(1) has five subunits: alpha(3), beta(3), gamma(1), delta(1), epsilon(1). CF(0) has three main subunits: a(1), b(2) and c(9-12). The alpha and beta chains form an alternating ring which encloses part of the gamma chain. CF(1) is attached to CF(0) by a central stalk formed by the gamma and epsilon chains, while a peripheral stalk is formed by the delta and b chains.

It is found in the cell inner membrane. The enzyme catalyses ATP + H2O + 4 H(+)(in) = ADP + phosphate + 5 H(+)(out). Its function is as follows. Produces ATP from ADP in the presence of a proton gradient across the membrane. The alpha chain is a regulatory subunit. The polypeptide is ATP synthase subunit alpha (Campylobacter curvus (strain 525.92)).